Reading from the N-terminus, the 272-residue chain is Glutamate 5-kinase (272 aa).

Residue Lys-15 participates in ATP binding. Ser-55, Asp-142, and Asn-158 together coordinate substrate. ATP-binding positions include 178–179 (SD) and 220–226 (TGGMLSK).

The protein belongs to the glutamate 5-kinase family.

The protein resides in the cytoplasm. It catalyses the reaction L-glutamate + ATP = L-glutamyl 5-phosphate + ADP. It functions in the pathway amino-acid biosynthesis; L-proline biosynthesis; L-glutamate 5-semialdehyde from L-glutamate: step 1/2. Catalyzes the transfer of a phosphate group to glutamate to form L-glutamate 5-phosphate. This is Glutamate 5-kinase from Streptococcus equi subsp. zooepidemicus (strain H70).